The primary structure comprises 65 residues: Alpha-toxin OD1 (65 aa).

Residues 3–65 form the LCN-type CS-alpha/beta domain; that stretch reads RDAYIADDKN…VPIRIPGKCR (63 aa). The Important for toxin selectivity for individual Nav channel subtype (Nav1.6/SCN8A and Nav1.7/SCN9A), but not for toxin potency motif lies at 9-11; sequence DDK. Disulfide bonds link Cys-13-Cys-64, Cys-17-Cys-37, Cys-23-Cys-47, and Cys-27-Cys-49. Position 65 is an arginine amide (Arg-65).

It belongs to the long (4 C-C) scorpion toxin superfamily. Sodium channel inhibitor family. Alpha subfamily. Expressed by the venom gland.

It is found in the secreted. In terms of biological role, alpha toxins bind voltage-independently at site-3 of sodium channels and inhibit the inactivation of the activated channels. The toxin affect mammalian sodium channels Nav1.7/SCN9A (EC(50)=4.5 nM), Nav1.4/SCN4A (EC(50)=9.6 nM), Nav1.6/SCN8A (EC(50)=30 nM), Nav1.5/SCN5A (only at micromolar concentrations), and insect sodium channel para/tipE (EC(50)=80 nM). In vivo, intraplantar administration of this toxin elicits pain behaviors, including licking and flinching of the hind paw. This is Alpha-toxin OD1 from Odontobuthus doriae (Yellow Iranian scorpion).